A 265-amino-acid polypeptide reads, in one-letter code: GTP cyclohydrolase FolE2 (265 aa).

It belongs to the GTP cyclohydrolase IV family.

It carries out the reaction GTP + H2O = 7,8-dihydroneopterin 3'-triphosphate + formate + H(+). It participates in cofactor biosynthesis; 7,8-dihydroneopterin triphosphate biosynthesis; 7,8-dihydroneopterin triphosphate from GTP: step 1/1. Functionally, converts GTP to 7,8-dihydroneopterin triphosphate. The polypeptide is GTP cyclohydrolase FolE2 (Bordetella avium (strain 197N)).